The primary structure comprises 90 residues: Small ribosomal subunit protein uS15 (90 aa).

Belongs to the universal ribosomal protein uS15 family. As to quaternary structure, part of the 30S ribosomal subunit. Forms a bridge to the 50S subunit in the 70S ribosome, contacting the 23S rRNA.

Functionally, one of the primary rRNA binding proteins, it binds directly to 16S rRNA where it helps nucleate assembly of the platform of the 30S subunit by binding and bridging several RNA helices of the 16S rRNA. In terms of biological role, forms an intersubunit bridge (bridge B4) with the 23S rRNA of the 50S subunit in the ribosome. The sequence is that of Small ribosomal subunit protein uS15 from Tropheryma whipplei (strain TW08/27) (Whipple's bacillus).